The following is a 307-amino-acid chain: Sex-lethal homolog (307 aa).

RRM domains lie at 85–163 and 171–251; these read TNLI…YARP and TNLY…LAEE. Residues 285–299 show a composition bias toward basic residues; it reads HRGRHNKNRNQKPHP. The segment at 285–307 is disordered; that stretch reads HRGRHNKNRNQKPHPYHNPQKFI.

It is found in the nucleus. Its function is as follows. Unknown; apparently not involved in somatic sex determination. This is Sex-lethal homolog (SXL) from Chrysomya rufifacies (Hairy maggot blowfly).